A 143-amino-acid polypeptide reads, in one-letter code: Large ribosomal subunit protein uL11 (143 aa).

It belongs to the universal ribosomal protein uL11 family. Part of the ribosomal stalk of the 50S ribosomal subunit. Interacts with L10 and the large rRNA to form the base of the stalk. L10 forms an elongated spine to which L12 dimers bind in a sequential fashion forming a multimeric L10(L12)X complex. Post-translationally, one or more lysine residues are methylated.

Functionally, forms part of the ribosomal stalk which helps the ribosome interact with GTP-bound translation factors. In Variovorax paradoxus (strain S110), this protein is Large ribosomal subunit protein uL11.